The following is a 1477-amino-acid chain: Inositol hexakisphosphate and diphosphoinositol-pentakisphosphate kinase 1 (1477 aa).

The tract at residues 27–47 is disordered; the sequence is TRGLGMRPEESDSELLEDEED. The segment covering 37 to 47 has biased composition (acidic residues); the sequence is SDSELLEDEED. 64 to 65 serves as a coordination point for substrate; the sequence is KK. ATP is bound by residues Arg145, Lys198, His205, Arg224, 248–251, and 257–259; these read EEFM and DVK. Residue 224-225 coordinates substrate; that stretch reads RK. Positions 259 and 273 each coordinate substrate. Residues Ser275, Asp320, and 332 to 334 contribute to the ATP site; that span reads DVN. 337–340 is a binding site for substrate; it reads SFVK. Residues 382–453 form a polyphosphoinositide-binding domain region; the sequence is PTTSGTMMEL…VLDITRLLLA (72 aa). The tract at residues 910–1016 is disordered; the sequence is KGVEEEGSAP…PTEMKQSGLG (107 aa). Phosphoserine is present on residues Ser940 and Ser983. The span at 1001–1016 shows a compositional bias: polar residues; that stretch reads FSSSRPPTEMKQSGLG. Phosphoserine occurs at positions 1033, 1069, 1141, and 1148. Disordered stretches follow at residues 1131–1248 and 1438–1477; these read HSNQ…KPCQ and REEV…SFSH. Over residues 1164–1182 the composition is skewed to low complexity; that stretch reads SSGPSSTVSSAGPSSPTAV. Polar residues predominate over residues 1446–1460; that stretch reads CPPSNANPQSQSLAP.

It belongs to the histidine acid phosphatase family. VIP1 subfamily.

It localises to the cytoplasm. Its subcellular location is the cytosol. It is found in the cell membrane. The catalysed reaction is 1D-myo-inositol hexakisphosphate + ATP = 1-diphospho-1D-myo-inositol 2,3,4,5,6-pentakisphosphate + ADP. It catalyses the reaction 5-diphospho-1D-myo-inositol 1,2,3,4,6-pentakisphosphate + ATP + H(+) = 1,5-bis(diphospho)-1D-myo-inositol 2,3,4,6-tetrakisphosphate + ADP. Bifunctional inositol kinase that acts in concert with the IP6K kinases IP6K1, IP6K2 and IP6K3 to synthesize the diphosphate group-containing inositol pyrophosphates diphosphoinositol pentakisphosphate, PP-InsP5, and bis-diphosphoinositol tetrakisphosphate, (PP)2-InsP4. PP-InsP5 and (PP)2-InsP4, also respectively called InsP7 and InsP8, regulate a variety of cellular processes, including apoptosis, vesicle trafficking, cytoskeletal dynamics, exocytosis, insulin signaling and neutrophil activation. Phosphorylates inositol hexakisphosphate (InsP6) at position 1 to produce PP-InsP5 which is in turn phosphorylated by IP6Ks to produce (PP)2-InsP4. Alternatively, phosphorylates PP-InsP5 at position 1, produced by IP6Ks from InsP6, to produce (PP)2-InsP4. Activated when cells are exposed to hyperosmotic stress. In Bos taurus (Bovine), this protein is Inositol hexakisphosphate and diphosphoinositol-pentakisphosphate kinase 1.